The chain runs to 250 residues: Probable transcriptional regulatory protein ckrop_1032 (250 aa).

The interval 1-22 (MSGHSKWATTKHKKAANDAKRG) is disordered.

This sequence belongs to the TACO1 family.

It is found in the cytoplasm. This is Probable transcriptional regulatory protein ckrop_1032 from Corynebacterium kroppenstedtii (strain DSM 44385 / JCM 11950 / CIP 105744 / CCUG 35717).